Consider the following 120-residue polypeptide: UPF0102 protein Caur_2698 (120 aa).

Belongs to the UPF0102 family.

This is UPF0102 protein Caur_2698 from Chloroflexus aurantiacus (strain ATCC 29366 / DSM 635 / J-10-fl).